The primary structure comprises 218 residues: E3 ubiquitin-protein ligase MARCHF3 (218 aa).

The segment at 63-123 adopts an RING-CH-type zinc-finger fold; sequence SPFNDRPMCR…ELCHFRFAVE (61 aa). 8 residues coordinate Zn(2+): cysteine 71, cysteine 74, cysteine 87, cysteine 89, histidine 97, cysteine 100, cysteine 113, and cysteine 116. The next 2 membrane-spanning stretches (helical) occupy residues 145–165 and 180–200; these read LFGDMVCFLFITPLATISGWL and LEAVGLIALTVALFTIYLFWT.

As to quaternary structure, interacts with MARCHF2 and STX6.

Its subcellular location is the cytoplasmic vesicle membrane. It is found in the early endosome membrane. It carries out the reaction S-ubiquitinyl-[E2 ubiquitin-conjugating enzyme]-L-cysteine + [acceptor protein]-L-lysine = [E2 ubiquitin-conjugating enzyme]-L-cysteine + N(6)-ubiquitinyl-[acceptor protein]-L-lysine.. The protein operates within protein modification; protein ubiquitination. Its function is as follows. E3 ubiquitin-protein ligase which may be involved in endosomal trafficking. E3 ubiquitin ligases accept ubiquitin from an E2 ubiquitin-conjugating enzyme in the form of a thioester and then directly transfer the ubiquitin to targeted substrates. The sequence is that of E3 ubiquitin-protein ligase MARCHF3 (Marchf3) from Mus musculus (Mouse).